The primary structure comprises 226 residues: ATP synthase F(0) complex subunit a (226 aa).

The next 7 membrane-spanning stretches (helical) occupy residues 11-31, 37-54, 72-92, 98-118, 138-158, 178-198, and 199-219; these read SPELLMIPTALLSMLVPVLLI, LLGNRMTTAIAWLLMTIM, LTSLLLMILLSNLLGLLPYTF, LSMNMAMAIPLWMATIITGMT, IPFMIIIETISLLMRPLALGV, TLNFITSHITLSIMTYLLLFL, and LCILELAVACIQAYVFVLLII.

The protein belongs to the ATPase A chain family. Component of the ATP synthase complex composed at least of ATP5F1A/subunit alpha, ATP5F1B/subunit beta, ATP5MC1/subunit c (homooctomer), MT-ATP6/subunit a, MT-ATP8/subunit 8, ATP5ME/subunit e, ATP5MF/subunit f, ATP5MG/subunit g, ATP5MK/subunit k, ATP5MJ/subunit j, ATP5F1C/subunit gamma, ATP5F1D/subunit delta, ATP5F1E/subunit epsilon, ATP5PF/subunit F6, ATP5PB/subunit b, ATP5PD/subunit d, ATP5PO/subunit OSCP. ATP synthase complex consists of a soluble F(1) head domain (subunits alpha(3) and beta(3)) - the catalytic core - and a membrane F(0) domain - the membrane proton channel (subunits c, a, 8, e, f, g, k and j). These two domains are linked by a central stalk (subunits gamma, delta, and epsilon) rotating inside the F1 region and a stationary peripheral stalk (subunits F6, b, d, and OSCP). Interacts with DNAJC30; interaction is direct.

The protein resides in the mitochondrion inner membrane. It catalyses the reaction H(+)(in) = H(+)(out). In terms of biological role, subunit a, of the mitochondrial membrane ATP synthase complex (F(1)F(0) ATP synthase or Complex V) that produces ATP from ADP in the presence of a proton gradient across the membrane which is generated by electron transport complexes of the respiratory chain. ATP synthase complex consist of a soluble F(1) head domain - the catalytic core - and a membrane F(1) domain - the membrane proton channel. These two domains are linked by a central stalk rotating inside the F(1) region and a stationary peripheral stalk. During catalysis, ATP synthesis in the catalytic domain of F(1) is coupled via a rotary mechanism of the central stalk subunits to proton translocation. With the subunit c (ATP5MC1), forms the proton-conducting channel in the F(0) domain, that contains two crucial half-channels (inlet and outlet) that facilitate proton movement from the mitochondrial intermembrane space (IMS) into the matrix. Protons are taken up via the inlet half-channel and released through the outlet half-channel, following a Grotthuss mechanism. This is ATP synthase F(0) complex subunit a from Lycodon semicarinatus (Ryukyu odd-tooth snake).